Consider the following 251-residue polypeptide: N-acetylmuramoyl-L-alanine amidase CwlA (251 aa).

Positions M1–A37 are cleaved as a signal peptide. Positions I38 to H140 constitute an N-acetylmuramoyl-L-alanine amidase domain.

The protein belongs to the N-acetylmuramoyl-L-alanine amidase 2 family.

It is found in the secreted. The catalysed reaction is Hydrolyzes the link between N-acetylmuramoyl residues and L-amino acid residues in certain cell-wall glycopeptides.. Autolysins are involved in some important biological processes such as cell separation, cell-wall turnover, competence for genetic transformation, formation of the flagella and sporulation. In Bacillus sp, this protein is N-acetylmuramoyl-L-alanine amidase CwlA (cwlA).